The following is a 119-amino-acid chain: Protein TusC (119 aa).

It belongs to the DsrF/TusC family. As to quaternary structure, heterohexamer, formed by a dimer of trimers. The hexameric TusBCD complex contains 2 copies each of TusB, TusC and TusD. The TusBCD complex interacts with TusE.

It localises to the cytoplasm. Part of a sulfur-relay system required for 2-thiolation of 5-methylaminomethyl-2-thiouridine (mnm(5)s(2)U) at tRNA wobble positions. The polypeptide is Protein TusC (Shigella boydii serotype 18 (strain CDC 3083-94 / BS512)).